The following is a 122-amino-acid chain: Large ribosomal subunit protein bL12 (122 aa).

It belongs to the bacterial ribosomal protein bL12 family. Homodimer. Part of the ribosomal stalk of the 50S ribosomal subunit. Forms a multimeric L10(L12)X complex, where L10 forms an elongated spine to which 2 to 4 L12 dimers bind in a sequential fashion. Binds GTP-bound translation factors.

Functionally, forms part of the ribosomal stalk which helps the ribosome interact with GTP-bound translation factors. Is thus essential for accurate translation. In Xylella fastidiosa (strain M23), this protein is Large ribosomal subunit protein bL12.